A 337-amino-acid polypeptide reads, in one-letter code: MIVLGIETSCDETSVALVEDNTVIANLVYSQIQIHKKFGGVVPEIAAREHLKRLPILFSELISQTNINIERIDGIAVTKGPGLIGALLVGVSFAKGLALRYKKPLVGINHIIGHVYSNYLAYPDLKPPYIVLMVSGGHTLILKVEENNNVTILGRSVDDAVGEAFDKIARLLGLGYPGGPEIDKISKNGNPNAFNFPKPKMYDPDYNFSFSGLKTAVLYEIKRLTKSGYSENNLPIPDLAASAQEVMIDVLLHKVTKAARDNNLKNIVLAGGVAANSRLREKIRALSEEFNFYIPPLEYCSDNAAMIARAGLERIKSGENDGLNFEPVPNFFEMMST.

The Fe cation site is built by histidine 110 and histidine 114. Residues 133 to 137 (MVSGG), aspartate 166, glycine 179, aspartate 183, and asparagine 276 each bind substrate. A Fe cation-binding site is contributed by aspartate 302.

Belongs to the KAE1 / TsaD family. It depends on Fe(2+) as a cofactor.

It localises to the cytoplasm. The catalysed reaction is L-threonylcarbamoyladenylate + adenosine(37) in tRNA = N(6)-L-threonylcarbamoyladenosine(37) in tRNA + AMP + H(+). Required for the formation of a threonylcarbamoyl group on adenosine at position 37 (t(6)A37) in tRNAs that read codons beginning with adenine. Is involved in the transfer of the threonylcarbamoyl moiety of threonylcarbamoyl-AMP (TC-AMP) to the N6 group of A37, together with TsaE and TsaB. TsaD likely plays a direct catalytic role in this reaction. The protein is tRNA N6-adenosine threonylcarbamoyltransferase of Fervidobacterium nodosum (strain ATCC 35602 / DSM 5306 / Rt17-B1).